The following is a 320-amino-acid chain: Acetyl-coenzyme A carboxylase carboxyl transferase subunit alpha (320 aa).

A CoA carboxyltransferase C-terminal domain is found at 33-294 (AFDGEIESLR…GDAVEEELKA (262 aa)).

Belongs to the AccA family. Acetyl-CoA carboxylase is a heterohexamer composed of biotin carboxyl carrier protein (AccB), biotin carboxylase (AccC) and two subunits each of ACCase subunit alpha (AccA) and ACCase subunit beta (AccD).

The protein localises to the cytoplasm. The catalysed reaction is N(6)-carboxybiotinyl-L-lysyl-[protein] + acetyl-CoA = N(6)-biotinyl-L-lysyl-[protein] + malonyl-CoA. Its pathway is lipid metabolism; malonyl-CoA biosynthesis; malonyl-CoA from acetyl-CoA: step 1/1. Its function is as follows. Component of the acetyl coenzyme A carboxylase (ACC) complex. First, biotin carboxylase catalyzes the carboxylation of biotin on its carrier protein (BCCP) and then the CO(2) group is transferred by the carboxyltransferase to acetyl-CoA to form malonyl-CoA. In Phenylobacterium zucineum (strain HLK1), this protein is Acetyl-coenzyme A carboxylase carboxyl transferase subunit alpha.